We begin with the raw amino-acid sequence, 155 residues long: Cytochrome c-type biogenesis protein CcmE (155 aa).

Over 1–8 (MNPLRKKR) the chain is Cytoplasmic. Residues 9–29 (LLIIAALLAGVGLAMTLALGA) form a helical; Signal-anchor for type II membrane protein membrane-spanning segment. Residues 30–155 (LKENINLFYT…GGSSTPAKQG (126 aa)) are Periplasmic-facing. 2 residues coordinate heme: His-124 and Tyr-128. Positions 134–155 (TKALRDSGQAAPGGSSTPAKQG) are disordered.

It belongs to the CcmE/CycJ family.

It localises to the cell inner membrane. Heme chaperone required for the biogenesis of c-type cytochromes. Transiently binds heme delivered by CcmC and transfers the heme to apo-cytochromes in a process facilitated by CcmF and CcmH. The sequence is that of Cytochrome c-type biogenesis protein CcmE from Pseudomonas savastanoi pv. phaseolicola (strain 1448A / Race 6) (Pseudomonas syringae pv. phaseolicola (strain 1448A / Race 6)).